The chain runs to 80 residues: Tripartite terminase subunit 2 (80 aa).

Belongs to the herpesviridae TRM2 protein family. In terms of assembly, associates with TRM1 and TRM3 to form the tripartite terminase complex.

Its subcellular location is the host nucleus. Its function is as follows. Component of the molecular motor that translocates viral genomic DNA in empty capsid during DNA packaging. Forms a tripartite terminase complex together with TRM1 and TRM3 in the host cytoplasm. Once the complex reaches the host nucleus, it interacts with the capsid portal vertex. This portal forms a ring in which genomic DNA is translocated into the capsid. The polypeptide is Tripartite terminase subunit 2 (Homo sapiens (Human)).